Reading from the N-terminus, the 467-residue chain is MLTPVVSYSTVKEVKGPLLVIERTRGVAYGEIGEVVGPDGEPRRVQVIEVGTDYAVAQVLGGTLGLPAKGSTVRFYGKTLKLPVSEELIGRILDGKGQPRDHMPLPPPEDFRDVNGEPLNPYSREYPEEPIETGISAIDGLYTLVRGQKLPIFSGTGLPHNLMAAQVVRQSTVRGSEEGFAVVFVGVGIKTEEAIFFMDEFRKTGALRRAVAVLNLASDPVAERILAPRVGLTIAEYLAWQLGYHVLVVITDMTNYCEGLRELSSGRGELPGRRGYPGYMYTDLATIYERAGKARGKKGSVTQFPILTMPHDDITHPIPDLTGYITEGQLVLSRSMWGKGIYPPFDVIMSLSRLAKDAIGEGKTREDHKDVANTLISAYSKALELRNLATLVGERNLGWRERRYLRFADAFEQRFIKQGYYERRSFEETLDIGWDVMSILPEDELTNARPQITQKFYRRHIFESIKL.

The interval 95–114 (GKGQPRDHMPLPPPEDFRDV) is disordered.

Belongs to the ATPase alpha/beta chains family. Has multiple subunits with at least A(3), B(3), C, D, E, F, H, I and proteolipid K(x).

It localises to the cell membrane. Component of the A-type ATP synthase that produces ATP from ADP in the presence of a proton gradient across the membrane. The B chain is a regulatory subunit. This is A-type ATP synthase subunit B from Pyrobaculum neutrophilum (strain DSM 2338 / JCM 9278 / NBRC 100436 / V24Sta) (Thermoproteus neutrophilus).